Consider the following 211-residue polypeptide: HTH-type transcriptional regulator AlkX (211 aa).

The HTH tetR-type domain occupies 22–82 (ALLRDSVLDA…GYALRLADRL (61 aa)). The H-T-H motif DNA-binding region spans 45–64 (TLSDVARAAGISRQTIYNEF).

As to quaternary structure, homodimer.

It is found in the cytoplasm. With respect to regulation, DNA-binding activity may be regulated by fatty acids. Its function is as follows. Represses the expression of the alkB-rubAB operon, which encodes the alkane hydroxylase AlkB and the rubredoxins RubA and RubB. Acts by binding to the promoter region of the operon. In addition, EMSA analysis show that AlkX can bind to the promoter region of mmpS1 and mmpL3 and to the intragenic region of mmpL11, suggesting that it may participate in the regulatory network that controls the expression of MmpL lipid transporters. The sequence is that of HTH-type transcriptional regulator AlkX from Mycobacterium tuberculosis (strain ATCC 25618 / H37Rv).